Here is a 208-residue protein sequence, read N- to C-terminus: Putative adhesin P1-like protein MPN_468 (208 aa).

Disordered regions lie at residues 29-49 (TNGS…VAPT) and 97-172 (DSKT…NLTP). Low complexity predominate over residues 100–132 (TQNNTTTNENHTKFASATGSGQQQGSTTTTSAG). Positions 145–158 (SGNSISVQEATSGD) are enriched in polar residues. Residues 159 to 172 (NLTNYTNLPPNLTP) show a composition bias toward low complexity.

This sequence belongs to the adhesin P1 family.

In Mycoplasma pneumoniae (strain ATCC 29342 / M129 / Subtype 1) (Mycoplasmoides pneumoniae), this protein is Putative adhesin P1-like protein MPN_468.